The sequence spans 668 residues: Calpain-13 (668 aa).

The region spanning 34–331 (LFIDDTFPAE…FSCLYICSQF (298 aa)) is the Calpain catalytic domain. Catalysis depends on residues Cys93, His249, and Asn273. EF-hand domains follow at residues 537–572 (FSLD…LIHC) and 635–668 (IRLE…VMYS).

It belongs to the peptidase C2 family.

Functionally, probable non-lysosomal thiol-protease. The polypeptide is Calpain-13 (Capn13) (Rattus norvegicus (Rat)).